Consider the following 161-residue polypeptide: Nucleotide-binding protein Bcep18194_A5887 (161 aa).

This sequence belongs to the YajQ family.

Its function is as follows. Nucleotide-binding protein. The protein is Nucleotide-binding protein Bcep18194_A5887 of Burkholderia lata (strain ATCC 17760 / DSM 23089 / LMG 22485 / NCIMB 9086 / R18194 / 383).